A 1079-amino-acid polypeptide reads, in one-letter code: BRD4-interacting chromatin-remodeling complex-associated protein-like (1079 aa).

Disordered stretches follow at residues 51 to 79 (NSSN…LPLS) and 509 to 604 (LHLS…TPGT). Residues 68 to 79 (LGEGPSDGLPLS) show a composition bias toward low complexity. Polar residues predominate over residues 544–576 (SSASTAHPSLGSAVQSGSSGSNFTGDQLTQPNR). The segment covering 590–604 (SSSKSTSTFSNTPGT) has biased composition (low complexity). Position 623 is a phosphoserine (S623). 3 disordered regions span residues 669–691 (EKVV…GGQK), 837–877 (TQFG…NHDQ), and 917–954 (TSEE…TESK). Composition is skewed to basic and acidic residues over residues 918–928 (SEEKASRREPL) and 938–952 (EGHR…HGTE). S980 carries the phosphoserine modification.

Component of the multiprotein chromatin-remodeling complexes SWI/SNF: SWI/SNF-A (BAF), SWI/SNF-B (PBAF) and related complexes. The canonical complex contains a catalytic subunit (either SMARCA4/BRG1/BAF190A or SMARCA2/BRM/BAF190B) and at least SMARCE1, ACTL6A/BAF53, SMARCC1/BAF155, SMARCC2/BAF170, and SMARCB1/SNF5/BAF47. Other subunits specific to each of the complexes may also be present permitting several possible combinations developmentally and tissue specific. Component of the SWI/SNF (GBAF) subcomplex, which includes at least BICRA or BICRAL (mutually exclusive), BRD9, SS18, the core BAF subunits, SMARCA2/BRM, SMARCA4/BRG1/BAF190A, ACTL6A/BAF53, SMARCC1/BAF155, and SMARCD1/BAF60A.

Its function is as follows. Component of SWI/SNF chromatin remodeling subcomplex GBAF that carries out key enzymatic activities, changing chromatin structure by altering DNA-histone contacts within a nucleosome in an ATP-dependent manner. This chain is BRD4-interacting chromatin-remodeling complex-associated protein-like, found in Homo sapiens (Human).